The primary structure comprises 323 residues: tRNA-cytidine(32) 2-sulfurtransferase (323 aa).

Positions 49–54 (SGGKDS) match the PP-loop motif motif. 3 residues coordinate [4Fe-4S] cluster: cysteine 124, cysteine 127, and cysteine 215.

This sequence belongs to the TtcA family. In terms of assembly, homodimer. The cofactor is Mg(2+). Requires [4Fe-4S] cluster as cofactor.

It is found in the cytoplasm. It carries out the reaction cytidine(32) in tRNA + S-sulfanyl-L-cysteinyl-[cysteine desulfurase] + AH2 + ATP = 2-thiocytidine(32) in tRNA + L-cysteinyl-[cysteine desulfurase] + A + AMP + diphosphate + H(+). It participates in tRNA modification. Its function is as follows. Catalyzes the ATP-dependent 2-thiolation of cytidine in position 32 of tRNA, to form 2-thiocytidine (s(2)C32). The sulfur atoms are provided by the cysteine/cysteine desulfurase (IscS) system. This Shewanella denitrificans (strain OS217 / ATCC BAA-1090 / DSM 15013) protein is tRNA-cytidine(32) 2-sulfurtransferase.